The sequence spans 351 residues: L-threonine 3-dehydrogenase (351 aa).

Cys-39 lines the Zn(2+) pocket. Catalysis depends on charge relay system residues Thr-41 and His-44. His-64, Glu-65, Cys-94, Cys-97, Cys-100, and Cys-108 together coordinate Zn(2+). NAD(+)-binding positions include Ile-176, Asp-196, Arg-201, 271 to 273 (LGI), and 295 to 296 (IY).

The protein belongs to the zinc-containing alcohol dehydrogenase family. In terms of assembly, homotetramer. It depends on Zn(2+) as a cofactor.

The protein resides in the cytoplasm. The enzyme catalyses L-threonine + NAD(+) = (2S)-2-amino-3-oxobutanoate + NADH + H(+). The protein operates within amino-acid degradation; L-threonine degradation via oxydo-reductase pathway; glycine from L-threonine: step 1/2. In terms of biological role, catalyzes the NAD(+)-dependent oxidation of L-threonine to 2-amino-3-ketobutyrate. This is L-threonine 3-dehydrogenase from Francisella tularensis subsp. mediasiatica (strain FSC147).